The primary structure comprises 139 residues: Putative pre-16S rRNA nuclease (139 aa).

This sequence belongs to the YqgF nuclease family.

It localises to the cytoplasm. Its function is as follows. Could be a nuclease involved in processing of the 5'-end of pre-16S rRNA. The polypeptide is Putative pre-16S rRNA nuclease (Proteus mirabilis (strain HI4320)).